Here is a 474-residue protein sequence, read N- to C-terminus: 6-phospho-beta-galactosidase (474 aa).

D-galactose 6-phosphate-binding residues include Q18, H115, N159, E160, and N296. E160 functions as the Proton donor in the catalytic mechanism. The Nucleophile role is filled by E374. D-galactose 6-phosphate is bound by residues S427, W428, K434, and Y436.

The protein belongs to the glycosyl hydrolase 1 family.

It carries out the reaction a 6-phospho-beta-D-galactoside + H2O = D-galactose 6-phosphate + an alcohol. It functions in the pathway carbohydrate metabolism; lactose degradation; D-galactose 6-phosphate and beta-D-glucose from lactose 6-phosphate: step 1/1. The protein is 6-phospho-beta-galactosidase of Clostridium acetobutylicum (strain ATCC 824 / DSM 792 / JCM 1419 / IAM 19013 / LMG 5710 / NBRC 13948 / NRRL B-527 / VKM B-1787 / 2291 / W).